Consider the following 308-residue polypeptide: Ribosomal RNA large subunit methyltransferase F (308 aa).

The tract at residues aspartate 190–aspartate 212 is disordered.

It belongs to the methyltransferase superfamily. METTL16/RlmF family.

Its subcellular location is the cytoplasm. It catalyses the reaction adenosine(1618) in 23S rRNA + S-adenosyl-L-methionine = N(6)-methyladenosine(1618) in 23S rRNA + S-adenosyl-L-homocysteine + H(+). Specifically methylates the adenine in position 1618 of 23S rRNA. In Citrobacter koseri (strain ATCC BAA-895 / CDC 4225-83 / SGSC4696), this protein is Ribosomal RNA large subunit methyltransferase F.